Reading from the N-terminus, the 480-residue chain is Glutamyl-tRNA(Gln) amidotransferase subunit A (480 aa).

Active-site charge relay system residues include lysine 74 and serine 149. Catalysis depends on serine 173, which acts as the Acyl-ester intermediate.

Belongs to the amidase family. GatA subfamily. Heterotrimer of A, B and C subunits.

It catalyses the reaction L-glutamyl-tRNA(Gln) + L-glutamine + ATP + H2O = L-glutaminyl-tRNA(Gln) + L-glutamate + ADP + phosphate + H(+). Functionally, allows the formation of correctly charged Gln-tRNA(Gln) through the transamidation of misacylated Glu-tRNA(Gln) in organisms which lack glutaminyl-tRNA synthetase. The reaction takes place in the presence of glutamine and ATP through an activated gamma-phospho-Glu-tRNA(Gln). The sequence is that of Glutamyl-tRNA(Gln) amidotransferase subunit A from Prochlorococcus marinus (strain MIT 9312).